Here is a 407-residue protein sequence, read N- to C-terminus: Carbamoyl phosphate synthase small chain (407 aa).

Positions 1-203 (MSQNESGTIA…EPCGEYEGKE (203 aa)) are CPSase. Ser61, Gly255, and Gly257 together coordinate L-glutamine. One can recognise a Glutamine amidotransferase type-1 domain in the interval 207-405 (TVAAVDLGIK…CELMKNNSKE (199 aa)). Cys283 functions as the Nucleophile in the catalytic mechanism. 5 residues coordinate L-glutamine: Phe284, Gln287, Asn325, Gly327, and Phe328. Residues His378 and Glu380 contribute to the active site.

This sequence belongs to the CarA family. As to quaternary structure, composed of two chains; the small (or glutamine) chain promotes the hydrolysis of glutamine to ammonia, which is used by the large (or ammonia) chain to synthesize carbamoyl phosphate. Tetramer of heterodimers (alpha,beta)4.

The enzyme catalyses hydrogencarbonate + L-glutamine + 2 ATP + H2O = carbamoyl phosphate + L-glutamate + 2 ADP + phosphate + 2 H(+). It catalyses the reaction L-glutamine + H2O = L-glutamate + NH4(+). It functions in the pathway amino-acid biosynthesis; L-arginine biosynthesis; carbamoyl phosphate from bicarbonate: step 1/1. Its pathway is pyrimidine metabolism; UMP biosynthesis via de novo pathway; (S)-dihydroorotate from bicarbonate: step 1/3. In terms of biological role, small subunit of the glutamine-dependent carbamoyl phosphate synthetase (CPSase). CPSase catalyzes the formation of carbamoyl phosphate from the ammonia moiety of glutamine, carbonate, and phosphate donated by ATP, constituting the first step of 2 biosynthetic pathways, one leading to arginine and/or urea and the other to pyrimidine nucleotides. The small subunit (glutamine amidotransferase) binds and cleaves glutamine to supply the large subunit with the substrate ammonia. This chain is Carbamoyl phosphate synthase small chain, found in Bifidobacterium longum (strain NCC 2705).